Here is a 235-residue protein sequence, read N- to C-terminus: MLTYDQWEKAEKPSFPSDNETKGALDVLAWAYREYGDEIVYACSFGIEGIVLIDLISQVKPDAEIVFLDTGLHFPETYDTIAKVKEKYPSLRIVMKQPRLTLEEQKAQFGDELWKRDPNKCCELRKVIPLREVLTGVTAWISGLRREQSPTRRHVEYINKDDKFRSIKVCPLIHWTWKDVWNYVYKRHLPYNVLHDRGYPSIGCAPCTAPATDPNDLRSGRWAGQGKTECGLHLA.

The [4Fe-4S] cluster site is built by C121, C122, C204, and C207. C230 acts as the Nucleophile; cysteine thiosulfonate intermediate in catalysis.

Belongs to the PAPS reductase family. CysH subfamily. [4Fe-4S] cluster is required as a cofactor.

Its subcellular location is the cytoplasm. The enzyme catalyses [thioredoxin]-disulfide + sulfite + AMP + 2 H(+) = adenosine 5'-phosphosulfate + [thioredoxin]-dithiol. Its pathway is sulfur metabolism; hydrogen sulfide biosynthesis; sulfite from sulfate. Functionally, catalyzes the formation of sulfite from adenosine 5'-phosphosulfate (APS) using thioredoxin as an electron donor. The polypeptide is Adenosine 5'-phosphosulfate reductase (Geobacillus kaustophilus (strain HTA426)).